The sequence spans 63 residues: Large ribosomal subunit protein bL28 (63 aa).

It belongs to the bacterial ribosomal protein bL28 family.

The sequence is that of Large ribosomal subunit protein bL28 from Pelobacter propionicus (strain DSM 2379 / NBRC 103807 / OttBd1).